The primary structure comprises 265 residues: MQPDLHCRTLAAHTLKHFRALSPLTHCMTNDVVQTFTANTLLALGASPAMVIDPVEARPFAAIANALLVNVGTLTASRAEAMRAAVESAYDAKTPWTLDPVAVGALEFRRRFCLDLLSLRPAAIRGNASEILALSGMALGGRGVDTTEAALAALPAAQALARQIDCIVVVTGEVDYVTNGQRTLSIPGGDPLMTRIVGTGCALSAVVAASCALPGAALDNVASACCWMKLAGQTAAERSEGPGSFIPAFLDALYHLDVEAANEEN.

Position 50 (Met-50) interacts with substrate. Arg-125 and Thr-171 together coordinate ATP. Gly-198 serves as a coordination point for substrate.

It belongs to the Thz kinase family. It depends on Mg(2+) as a cofactor.

It carries out the reaction 5-(2-hydroxyethyl)-4-methylthiazole + ATP = 4-methyl-5-(2-phosphooxyethyl)-thiazole + ADP + H(+). The protein operates within cofactor biosynthesis; thiamine diphosphate biosynthesis; 4-methyl-5-(2-phosphoethyl)-thiazole from 5-(2-hydroxyethyl)-4-methylthiazole: step 1/1. Functionally, catalyzes the phosphorylation of the hydroxyl group of 4-methyl-5-beta-hydroxyethylthiazole (THZ). In Salmonella schwarzengrund (strain CVM19633), this protein is Hydroxyethylthiazole kinase.